Consider the following 505-residue polypeptide: ATP synthase subunit alpha, chloroplastic (505 aa).

An ATP-binding site is contributed by 170–177 (GDRQTGKT).

Belongs to the ATPase alpha/beta chains family. As to quaternary structure, F-type ATPases have 2 components, CF(1) - the catalytic core - and CF(0) - the membrane proton channel. CF(1) has five subunits: alpha(3), beta(3), gamma(1), delta(1), epsilon(1). CF(0) has four main subunits: a, b, b' and c.

Its subcellular location is the plastid. The protein localises to the chloroplast thylakoid membrane. It carries out the reaction ATP + H2O + 4 H(+)(in) = ADP + phosphate + 5 H(+)(out). In terms of biological role, produces ATP from ADP in the presence of a proton gradient across the membrane. The alpha chain is a regulatory subunit. The sequence is that of ATP synthase subunit alpha, chloroplastic from Zygnema circumcarinatum (Green alga).